A 60-amino-acid chain; its full sequence is Large ribosomal subunit protein uL30 (60 aa).

It belongs to the universal ribosomal protein uL30 family. As to quaternary structure, part of the 50S ribosomal subunit.

The sequence is that of Large ribosomal subunit protein uL30 from Polaromonas naphthalenivorans (strain CJ2).